Consider the following 274-residue polypeptide: MSYSALEAAIEAAWEARDTITPATKGEARDAVEATLEALDKGSLRVAEKRGADWHVNQWAKKAVLLGFRLKDMDVQTGGPQGGTWWDKVDSKFAQWGEAQWKAAGFRAVPNCIVRRSAYIAKGVVLMPSFVNLGAYVDEGTMVDTWATVGSCAQIGKNVHLSGGVGIGGVLEPMQAGPTIIEDNCFIGARSEVVEGCIVREGSVLGMGVFIGKSTKIVDRETGEVMYGEVPAGSVVVAGSMPSKGGVNLYCAVIVKRVDAQTRSKTSINELLRD.

2 residues coordinate substrate: Arg107 and Asp144.

Belongs to the transferase hexapeptide repeat family. In terms of assembly, homotrimer.

It is found in the cytoplasm. The catalysed reaction is (S)-2,3,4,5-tetrahydrodipicolinate + succinyl-CoA + H2O = (S)-2-succinylamino-6-oxoheptanedioate + CoA. The protein operates within amino-acid biosynthesis; L-lysine biosynthesis via DAP pathway; LL-2,6-diaminopimelate from (S)-tetrahydrodipicolinate (succinylase route): step 1/3. This chain is 2,3,4,5-tetrahydropyridine-2,6-dicarboxylate N-succinyltransferase, found in Cereibacter sphaeroides (strain ATCC 17025 / ATH 2.4.3) (Rhodobacter sphaeroides).